A 1023-amino-acid chain; its full sequence is Rho GTPase-activating protein 11A (1023 aa).

A Rho-GAP domain is found at 49 to 239; the sequence is VPFNALPHSA…TLIDYASDIG (191 aa). S285 carries the phosphoserine modification. T306 is modified (phosphothreonine). Phosphoserine occurs at positions 316 and 318. A Phosphothreonine modification is found at T323. Phosphoserine occurs at positions 339, 340, and 484. Position 508 is a phosphothreonine (T508). The disordered stretch occupies residues 567 to 589; it reads TPSNLNNKHNSNITSSPLSGDEN. Phosphoserine occurs at positions 582, 585, 638, and 675. A disordered region spans residues 714 to 734; it reads KQEFSSDEEIKKQQSPKDKLN. Over residues 721-734 the composition is skewed to basic and acidic residues; it reads EEIKKQQSPKDKLN. The residue at position 847 (S847) is a Phosphoserine. T866 carries the phosphothreonine modification. S868 carries the phosphoserine modification. Positions 999 to 1023 are disordered; sequence AWYKGSPKHPIGKTQLLPTSKPVDL.

The protein localises to the nucleus. In terms of biological role, GTPase activator for the Rho-type GTPases by converting them to an inactive GDP-bound state. The chain is Rho GTPase-activating protein 11A from Homo sapiens (Human).